The following is a 1405-amino-acid chain: DNA-directed RNA polymerase III subunit rpc1 (1405 aa).

Cysteine 66, cysteine 69, cysteine 76, histidine 79, cysteine 106, cysteine 109, and cysteine 153 together coordinate Zn(2+). Residues aspartate 493, aspartate 495, and aspartate 497 each coordinate Mg(2+). Positions 838 to 850 (PTEFLFHAISGRE) are bridging helix.

The protein belongs to the RNA polymerase beta' chain family. Component of the RNA polymerase III (Pol III) complex consisting of 17 subunits.

The protein localises to the nucleus. It catalyses the reaction RNA(n) + a ribonucleoside 5'-triphosphate = RNA(n+1) + diphosphate. In terms of biological role, DNA-dependent RNA polymerase catalyzes the transcription of DNA into RNA using the four ribonucleoside triphosphates as substrates. Largest and catalytic core component of RNA polymerase III which synthesizes small RNAs, such as 5S rRNA and tRNAs. Forms the polymerase active center together with the second largest subunit. A single-stranded DNA template strand of the promoter is positioned within the central active site cleft of Pol III. A bridging helix emanates from RPC1 and crosses the cleft near the catalytic site and is thought to promote translocation of Pol III by acting as a ratchet that moves the RNA-DNA hybrid through the active site by switching from straight to bent conformations at each step of nucleotide addition. The polypeptide is DNA-directed RNA polymerase III subunit rpc1 (rpc1) (Schizosaccharomyces pombe (strain 972 / ATCC 24843) (Fission yeast)).